Reading from the N-terminus, the 185-residue chain is Crossover junction endodeoxyribonuclease RuvC (185 aa).

Active-site residues include Asp-7, Glu-66, and Asp-137. Mg(2+)-binding residues include Asp-7, Glu-66, and Asp-137.

The protein belongs to the RuvC family. As to quaternary structure, homodimer which binds Holliday junction (HJ) DNA. The HJ becomes 2-fold symmetrical on binding to RuvC with unstacked arms; it has a different conformation from HJ DNA in complex with RuvA. In the full resolvosome a probable DNA-RuvA(4)-RuvB(12)-RuvC(2) complex forms which resolves the HJ. Mg(2+) serves as cofactor.

The protein resides in the cytoplasm. The catalysed reaction is Endonucleolytic cleavage at a junction such as a reciprocal single-stranded crossover between two homologous DNA duplexes (Holliday junction).. In terms of biological role, the RuvA-RuvB-RuvC complex processes Holliday junction (HJ) DNA during genetic recombination and DNA repair. Endonuclease that resolves HJ intermediates. Cleaves cruciform DNA by making single-stranded nicks across the HJ at symmetrical positions within the homologous arms, yielding a 5'-phosphate and a 3'-hydroxyl group; requires a central core of homology in the junction. The consensus cleavage sequence is 5'-(A/T)TT(C/G)-3'. Cleavage occurs on the 3'-side of the TT dinucleotide at the point of strand exchange. HJ branch migration catalyzed by RuvA-RuvB allows RuvC to scan DNA until it finds its consensus sequence, where it cleaves and resolves the cruciform DNA. This Anaeromyxobacter dehalogenans (strain 2CP-C) protein is Crossover junction endodeoxyribonuclease RuvC.